The following is a 307-amino-acid chain: Oxygen-dependent coproporphyrinogen-III oxidase (307 aa).

Ser-99 lines the substrate pocket. A divalent metal cation contacts are provided by His-103 and His-113. The active-site Proton donor is the His-113. A substrate-binding site is contributed by 115–117 (NVR). A divalent metal cation is bound by residues His-152 and His-182. The important for dimerization stretch occupies residues 247-282 (YVEFNLVFDRGTLFGLQSGGRTESILMSMPPVANWR). 265–267 (GGR) provides a ligand contact to substrate.

Belongs to the aerobic coproporphyrinogen-III oxidase family. Homodimer. A divalent metal cation is required as a cofactor.

It localises to the cytoplasm. The catalysed reaction is coproporphyrinogen III + O2 + 2 H(+) = protoporphyrinogen IX + 2 CO2 + 2 H2O. The protein operates within porphyrin-containing compound metabolism; protoporphyrin-IX biosynthesis; protoporphyrinogen-IX from coproporphyrinogen-III (O2 route): step 1/1. Involved in the heme biosynthesis. Catalyzes the aerobic oxidative decarboxylation of propionate groups of rings A and B of coproporphyrinogen-III to yield the vinyl groups in protoporphyrinogen-IX. The sequence is that of Oxygen-dependent coproporphyrinogen-III oxidase from Burkholderia multivorans (strain ATCC 17616 / 249).